We begin with the raw amino-acid sequence, 348 residues long: Aspartate carbamoyltransferase catalytic subunit (348 aa).

Carbamoyl phosphate-binding residues include arginine 59 and threonine 60. Lysine 87 contributes to the L-aspartate binding site. Positions 109, 142, and 145 each coordinate carbamoyl phosphate. L-aspartate is bound by residues arginine 182 and arginine 253. Carbamoyl phosphate-binding residues include glycine 294 and proline 295.

This sequence belongs to the aspartate/ornithine carbamoyltransferase superfamily. ATCase family. As to quaternary structure, heterododecamer (2C3:3R2) of six catalytic PyrB chains organized as two trimers (C3), and six regulatory PyrI chains organized as three dimers (R2).

It catalyses the reaction carbamoyl phosphate + L-aspartate = N-carbamoyl-L-aspartate + phosphate + H(+). It functions in the pathway pyrimidine metabolism; UMP biosynthesis via de novo pathway; (S)-dihydroorotate from bicarbonate: step 2/3. Catalyzes the condensation of carbamoyl phosphate and aspartate to form carbamoyl aspartate and inorganic phosphate, the committed step in the de novo pyrimidine nucleotide biosynthesis pathway. The sequence is that of Aspartate carbamoyltransferase catalytic subunit from Prochlorococcus marinus (strain MIT 9313).